The primary structure comprises 582 residues: NAB transcription cofactor mab-10 (582 aa).

Low complexity predominate over residues 1–70 (MSSSSSSSLP…SSSSQRQSTS (70 aa)). Disordered stretches follow at residues 1-84 (MSSS…MPTP), 257-287 (SDQQSSSTSSVRSVLPSTSSNTSHPELPAGI), 333-365 (PPSSTSIQQPSTSFGRSSSITGQEKEGSSSPFL), and 516-582 (SRKR…LPES). The segment at 83-161 (TPTTLSEWQL…EYSQDQTAFN (79 aa)) is NCD1. 2 stretches are compositionally biased toward low complexity: residues 257 to 276 (SDQQSSSTSSVRSVLPSTSS) and 333 to 345 (PPSSTSIQQPSTS). Residues 396–519 (LSTAQISRLA…GYNYAKSRKR (124 aa)) are NCD2. The span at 573-582 (EKMKGELPES) shows a compositional bias: basic and acidic residues.

This sequence belongs to the NAB family. As to quaternary structure, interacts with transcription factor lin-29 (via C-terminus).

Its subcellular location is the nucleus. In terms of biological role, transcriptional cofactor. Heterochronic protein, involved in timing of a subset of differentiation events during the larval-to-adult transition. Promotes hypodermal terminal differentiation, together with transcription factor lin-29, perhaps as part of a transcriptional complex. Involved in regulating molting by repressing the expression of nuclear hormone receptors nhr-23 and nhr-25 in the adult hypoderm, probably acting in concert with lin-29. This chain is NAB transcription cofactor mab-10, found in Caenorhabditis elegans.